Here is a 130-residue protein sequence, read N- to C-terminus: ATP synthase epsilon chain (130 aa).

This sequence belongs to the ATPase epsilon chain family. In terms of assembly, F-type ATPases have 2 components, CF(1) - the catalytic core - and CF(0) - the membrane proton channel. CF(1) has five subunits: alpha(3), beta(3), gamma(1), delta(1), epsilon(1). CF(0) has three main subunits: a, b and c.

Its subcellular location is the cell inner membrane. Produces ATP from ADP in the presence of a proton gradient across the membrane. This chain is ATP synthase epsilon chain, found in Sulfurimonas denitrificans (strain ATCC 33889 / DSM 1251) (Thiomicrospira denitrificans (strain ATCC 33889 / DSM 1251)).